Consider the following 130-residue polypeptide: Small ribosomal subunit protein uS9 (130 aa).

This sequence belongs to the universal ribosomal protein uS9 family.

The polypeptide is Small ribosomal subunit protein uS9 (Streptococcus thermophilus (strain CNRZ 1066)).